The following is a 441-amino-acid chain: Damage-control phosphatase ARMT1 (441 aa).

N-acetylalanine is present on Ala-2. N6-acetyllysine is present on Lys-40. The residue at position 102 (Ser-102) is a Phosphoserine. Asp-253 and Asn-254 together coordinate Mn(2+). Substrate is bound at residue 253–254; sequence DN. S-adenosyl-L-methionine is bound by residues Glu-258 and Asp-291. Asp-291 lines the Mn(2+) pocket. Residues 367 to 371 and Lys-404 each bind substrate; that span reads DLNYR. The short motif at 401 to 404 is the Subfamily III RTxK motif element; it reads RTLK.

It belongs to the damage-control phosphatase family. Sugar phosphate phosphatase III subfamily. Mn(2+) serves as cofactor. Ni(2+) is required as a cofactor. In terms of processing, automethylated.

The catalysed reaction is beta-D-fructose 1-phosphate + H2O = D-fructose + phosphate. It carries out the reaction beta-D-fructose 6-phosphate = dihydroxyacetone + D-glyceraldehyde 3-phosphate. It catalyses the reaction L-glutamyl-[protein] + S-adenosyl-L-methionine = [protein]-L-glutamate 5-O-methyl ester + S-adenosyl-L-homocysteine. Functionally, metal-dependent phosphatase that shows phosphatase activity against several substrates, including fructose-1-phosphate and fructose-6-phosphate. Its preference for fructose-1-phosphate, a strong glycating agent that causes DNA damage rather than a canonical yeast metabolite, suggests a damage-control function in hexose phosphate metabolism. Has also been shown to have O-methyltransferase activity that methylates glutamate residues of target proteins to form gamma-glutamyl methyl ester residues. Possibly methylates PCNA, suggesting it is involved in the DNA damage response. In Macaca fascicularis (Crab-eating macaque), this protein is Damage-control phosphatase ARMT1.